Consider the following 425-residue polypeptide: [Pyruvate dehydrogenase (acetyl-transferring)] kinase, mitochondrial (425 aa).

Histidine 178 is subject to Phosphohistidine; by autocatalysis. In terms of domain architecture, Histidine kinase spans 180–418 (NVAVEIALDI…DVYIHLNRLC (239 aa)). Residues 296 to 303 (EILKNSLR), aspartate 336, 355 to 356 (TT), and 379 to 384 (GFGFGL) each bind ATP.

Belongs to the PDK/BCKDK protein kinase family.

The protein resides in the mitochondrion matrix. The catalysed reaction is L-seryl-[pyruvate dehydrogenase E1 alpha subunit] + ATP = O-phospho-L-seryl-[pyruvate dehydrogenase E1 alpha subunit] + ADP + H(+). Its function is as follows. Inhibits the mitochondrial pyruvate dehydrogenase complex by phosphorylation of the E1 alpha subunit, thus contributing to the regulation of glucose metabolism. This is [Pyruvate dehydrogenase (acetyl-transferring)] kinase, mitochondrial (pkp1) from Schizosaccharomyces pombe (strain 972 / ATCC 24843) (Fission yeast).